A 466-amino-acid polypeptide reads, in one-letter code: Keratin, type II cytoskeletal 7 (466 aa).

Residue S2 is modified to N-acetylserine. A phosphoserine mark is found at S2 and S7. The head stretch occupies residues 2–91 (SLHFGSQVFS…DPSIQQVRQE (90 aa)). O-linked (GlcNAc) serine glycosylation occurs at S12. A Dimethylated arginine; alternate modification is found at R20. R20 carries the post-translational modification Omega-N-methylarginine; alternate. A phosphoserine mark is found at S54, S72, and S84. The segment at 91-127 (EEREQIKTLNNKFASFIDKVRFLEQQNKLLETKWALL) is coil 1A. One can recognise an IF rod domain in the interval 92–404 (EREQIKTLNN…KLLEGEESRL (313 aa)). The residue at position 98 (T98) is a Phosphothreonine. Residues 128-145 (QEQKSAKSNRLPGIFEAQ) are linker 1. K131 is covalently cross-linked (Glycyl lysine isopeptide (Lys-Gly) (interchain with G-Cter in SUMO2)). Residues 146 to 237 (IAGLRKQLEA…TLYEQELKEL (92 aa)) form a coil 1B region. Residue K180 is modified to N6-acetyllysine. A linker 12 region spans residues 238-261 (QSEVSDTSVVLSMDNNRSLDLDSI). A Phosphoserine modification is found at S255. The coil 2 stretch occupies residues 262 to 400 (IAEVKAQYEE…ATYRKLLEGE (139 aa)). Glycyl lysine isopeptide (Lys-Gly) (interchain with G-Cter in SUMO2) cross-links involve residues K266 and K287. Phosphothreonine is present on T290. Residues K297 and K332 each participate in a glycyl lysine isopeptide (Lys-Gly) (interchain with G-Cter in SUMO2) cross-link. Residues 401–466 (ESRLTGDGVG…TSATSRSPRK (66 aa)) form a tail region.

Belongs to the intermediate filament family. Heterotetramer of two type I and two type II keratins. Interacts with eukaryotic translation initiator factor 3 (eIF3) subunit EIF3S10. Interacts with GPER1. In terms of processing, arg-20 is dimethylated, probably to asymmetric dimethylarginine.

Its function is as follows. Blocks interferon-dependent interphase and stimulates DNA synthesis in cells. The chain is Keratin, type II cytoskeletal 7 from Bos taurus (Bovine).